The sequence spans 111 residues: Cell cycle protein GpsB (111 aa).

The stretch at Leu34–Ala72 forms a coiled coil.

It belongs to the GpsB family. In terms of assembly, forms polymers through the coiled coil domains. Interacts with PBP1, MreC and EzrA.

It is found in the cytoplasm. Its function is as follows. Divisome component that associates with the complex late in its assembly, after the Z-ring is formed, and is dependent on DivIC and PBP2B for its recruitment to the divisome. Together with EzrA, is a key component of the system that regulates PBP1 localization during cell cycle progression. Its main role could be the removal of PBP1 from the cell pole after pole maturation is completed. Also contributes to the recruitment of PBP1 to the division complex. Not essential for septum formation. The protein is Cell cycle protein GpsB of Bacillus cytotoxicus (strain DSM 22905 / CIP 110041 / 391-98 / NVH 391-98).